The sequence spans 87 residues: Cell division protein FtsL (87 aa).

The Cytoplasmic segment spans residues 1 to 3 (MSR). A helical membrane pass occupies residues 4 to 23 (LLLIVLLACSIASAIGVVYM). Residues 24–87 (RHMHRKLFVQ…ETSDIVVIRP (64 aa)) are Periplasmic-facing.

Belongs to the FtsL family. Part of a complex composed of FtsB, FtsL and FtsQ.

It localises to the cell inner membrane. In terms of biological role, essential cell division protein. May link together the upstream cell division proteins, which are predominantly cytoplasmic, with the downstream cell division proteins, which are predominantly periplasmic. The chain is Cell division protein FtsL from Xanthomonas campestris pv. campestris (strain ATCC 33913 / DSM 3586 / NCPPB 528 / LMG 568 / P 25).